Reading from the N-terminus, the 597-residue chain is NADH-quinone oxidoreductase subunit C/D (597 aa).

Positions 1–188 (MKKEIKRDDV…DPYVLNKYKE (188 aa)) are NADH dehydrogenase I subunit C. Positions 211 to 597 (KYMFLNLGPN…IDFVMSDVDR (387 aa)) are NADH dehydrogenase I subunit D.

It in the N-terminal section; belongs to the complex I 30 kDa subunit family. This sequence in the C-terminal section; belongs to the complex I 49 kDa subunit family. NDH-1 is composed of 13 different subunits. Subunits NuoB, CD, E, F, and G constitute the peripheral sector of the complex.

Its subcellular location is the cell inner membrane. The enzyme catalyses a quinone + NADH + 5 H(+)(in) = a quinol + NAD(+) + 4 H(+)(out). Its function is as follows. NDH-1 shuttles electrons from NADH, via FMN and iron-sulfur (Fe-S) centers, to quinones in the respiratory chain. The immediate electron acceptor for the enzyme in this species is believed to be ubiquinone. Couples the redox reaction to proton translocation (for every two electrons transferred, four hydrogen ions are translocated across the cytoplasmic membrane), and thus conserves the redox energy in a proton gradient. The sequence is that of NADH-quinone oxidoreductase subunit C/D from Buchnera aphidicola subsp. Baizongia pistaciae (strain Bp).